The sequence spans 137 residues: Small ribosomal subunit protein uS9c (137 aa).

The protein belongs to the universal ribosomal protein uS9 family.

The protein resides in the plastid. Its subcellular location is the chloroplast. In Gracilaria tenuistipitata var. liui (Red alga), this protein is Small ribosomal subunit protein uS9c (rps9).